Consider the following 846-residue polypeptide: DNA mismatch repair protein MutS (846 aa).

594–601 (GPNMSGKS) provides a ligand contact to ATP.

It belongs to the DNA mismatch repair MutS family.

Functionally, this protein is involved in the repair of mismatches in DNA. It is possible that it carries out the mismatch recognition step. This protein has a weak ATPase activity. This is DNA mismatch repair protein MutS from Macrococcus caseolyticus (strain JCSC5402) (Macrococcoides caseolyticum).